The primary structure comprises 339 residues: Anthranilate phosphoribosyltransferase (339 aa).

5-phospho-alpha-D-ribose 1-diphosphate contacts are provided by residues glycine 79, 82–83 (GD), serine 87, 89–92 (NIST), 107–115 (KHGNRAASS), and alanine 119. Glycine 79 contributes to the anthranilate binding site. A Mg(2+)-binding site is contributed by serine 91. Asparagine 110 provides a ligand contact to anthranilate. Anthranilate is bound at residue arginine 165. Mg(2+) is bound by residues aspartate 224 and glutamate 225.

The protein belongs to the anthranilate phosphoribosyltransferase family. Homodimer. It depends on Mg(2+) as a cofactor.

It catalyses the reaction N-(5-phospho-beta-D-ribosyl)anthranilate + diphosphate = 5-phospho-alpha-D-ribose 1-diphosphate + anthranilate. It functions in the pathway amino-acid biosynthesis; L-tryptophan biosynthesis; L-tryptophan from chorismate: step 2/5. In terms of biological role, catalyzes the transfer of the phosphoribosyl group of 5-phosphorylribose-1-pyrophosphate (PRPP) to anthranilate to yield N-(5'-phosphoribosyl)-anthranilate (PRA). This is Anthranilate phosphoribosyltransferase from Lactiplantibacillus plantarum (strain ATCC BAA-793 / NCIMB 8826 / WCFS1) (Lactobacillus plantarum).